A 430-amino-acid chain; its full sequence is Adenylosuccinate synthetase (430 aa).

GTP-binding positions include 12 to 18 and 40 to 42; these read GDEGKGK and GHT. D13 (proton acceptor) is an active-site residue. Residues D13 and G40 each contribute to the Mg(2+) site. IMP is bound by residues 13 to 16, 38 to 41, T130, R144, Q224, T239, and R303; these read DEGK and NAGH. Residue H41 is the Proton donor of the active site. 299–305 provides a ligand contact to substrate; that stretch reads TNTGRAR. Residues R305, 331-333, and 413-415 contribute to the GTP site; these read KLD and STS.

This sequence belongs to the adenylosuccinate synthetase family. In terms of assembly, homodimer. It depends on Mg(2+) as a cofactor.

Its subcellular location is the cytoplasm. It catalyses the reaction IMP + L-aspartate + GTP = N(6)-(1,2-dicarboxyethyl)-AMP + GDP + phosphate + 2 H(+). The protein operates within purine metabolism; AMP biosynthesis via de novo pathway; AMP from IMP: step 1/2. Plays an important role in the de novo pathway of purine nucleotide biosynthesis. Catalyzes the first committed step in the biosynthesis of AMP from IMP. This chain is Adenylosuccinate synthetase, found in Hyphomonas neptunium (strain ATCC 15444).